The sequence spans 273 residues: Large ribosomal subunit protein uL2 (273 aa).

2 disordered regions span residues 28–53 and 221–273; these read KPFA…TTRH and RGTA…RRSK. The span at 39 to 48 shows a compositional bias: low complexity; sequence KSGGRNNNGR. Lys-242 bears the N6-acetyllysine mark.

Belongs to the universal ribosomal protein uL2 family. Part of the 50S ribosomal subunit. Forms a bridge to the 30S subunit in the 70S ribosome.

One of the primary rRNA binding proteins. Required for association of the 30S and 50S subunits to form the 70S ribosome, for tRNA binding and peptide bond formation. It has been suggested to have peptidyltransferase activity; this is somewhat controversial. Makes several contacts with the 16S rRNA in the 70S ribosome. The polypeptide is Large ribosomal subunit protein uL2 (Shigella dysenteriae serotype 1 (strain Sd197)).